The sequence spans 34 residues: uncharacterized protein (34 aa).

A helical transmembrane segment spans residues 10-30 (LIITSSFFAIAVVLVLSVLLI).

The protein resides in the membrane. This is an uncharacterized protein from Shigella flexneri.